Reading from the N-terminus, the 844-residue chain is Putative ubiquitin thioesterase 232R (844 aa).

Disordered stretches follow at residues asparagine 136 to glutamate 223, serine 261 to glutamate 287, leucine 326 to threonine 377, and glutamine 422 to valine 541. Residues serine 137 to serine 216 show a composition bias toward low complexity. Low complexity-rich tracts occupy residues arginine 332 to arginine 341 and arginine 354 to arginine 364. Pro residues predominate over residues serine 429–valine 438. The segment covering valine 472–lysine 485 has biased composition (basic and acidic residues). Low complexity predominate over residues serine 504 to serine 518. Basic and acidic residues predominate over residues glutamate 526 to arginine 535. The OTU domain maps to tyrosine 590–isoleucine 725. Residue aspartate 598 is part of the active site. Cysteine 601 functions as the Nucleophile in the catalytic mechanism. Histidine 718 is a catalytic residue.

The enzyme catalyses Thiol-dependent hydrolysis of ester, thioester, amide, peptide and isopeptide bonds formed by the C-terminal Gly of ubiquitin (a 76-residue protein attached to proteins as an intracellular targeting signal).. In terms of biological role, hydrolase that can remove conjugated ubiquitin from proteins and may therefore play an important regulatory role at the level of protein turnover by preventing degradation. This Aedes vexans (Inland floodwater mosquito) protein is Putative ubiquitin thioesterase 232R.